The primary structure comprises 117 residues: Immunoglobulin lambda variable 1-44 (117 aa).

Residues 1–19 form the signal peptide; that stretch reads MASFPLLLTLLTHCAGSWA. Gln20 carries the pyrrolidone carboxylic acid modification. The tract at residues 20–44 is framework-1; the sequence is QSVLTQPPSASGTPGQRVTISCSGS. Residues 20–117 enclose the Ig-like domain; sequence QSVLTQPPSA…CAAWDDSLNG (98 aa). Positions 24 to 35 are enriched in polar residues; the sequence is TQPPSASGTPGQ. A disordered region spans residues 24–45; sequence TQPPSASGTPGQRVTISCSGSS. A disulfide bridge connects residues Cys41 and Cys108. The interval 45–52 is complementarity-determining-1; the sequence is SSNIGSNT. Positions 53-69 are framework-2; it reads VNWYQQLPGTAPKLLIY. Positions 70 to 72 are complementarity-determining-2; sequence SNN. The tract at residues 73–108 is framework-3; the sequence is QRPSGVPDRFSGSKSGTSASLAISGLQSEDEADYYC. Residues 109–117 are complementarity-determining-3; it reads AAWDDSLNG.

Immunoglobulins are composed of two identical heavy chains and two identical light chains; disulfide-linked.

It localises to the secreted. The protein resides in the cell membrane. In terms of biological role, v region of the variable domain of immunoglobulin light chains that participates in the antigen recognition. Immunoglobulins, also known as antibodies, are membrane-bound or secreted glycoproteins produced by B lymphocytes. In the recognition phase of humoral immunity, the membrane-bound immunoglobulins serve as receptors which, upon binding of a specific antigen, trigger the clonal expansion and differentiation of B lymphocytes into immunoglobulins-secreting plasma cells. Secreted immunoglobulins mediate the effector phase of humoral immunity, which results in the elimination of bound antigens. The antigen binding site is formed by the variable domain of one heavy chain, together with that of its associated light chain. Thus, each immunoglobulin has two antigen binding sites with remarkable affinity for a particular antigen. The variable domains are assembled by a process called V-(D)-J rearrangement and can then be subjected to somatic hypermutations which, after exposure to antigen and selection, allow affinity maturation for a particular antigen. The sequence is that of Immunoglobulin lambda variable 1-44 from Homo sapiens (Human).